The sequence spans 120 residues: Basic phospholipase A2 Cc2-PLA2 (120 aa).

7 cysteine pairs are disulfide-bonded: Cys-26-Cys-113, Cys-28-Cys-44, Cys-43-Cys-95, Cys-49-Cys-120, Cys-50-Cys-88, Cys-57-Cys-81, and Cys-75-Cys-86. Residues Tyr-27, Gly-29, and Gly-31 each coordinate Ca(2+). His-47 is a catalytic residue. Residue Asp-48 coordinates Ca(2+). Asp-89 is an active-site residue.

Belongs to the phospholipase A2 family. Group II subfamily. D49 sub-subfamily. Monomer. Ca(2+) is required as a cofactor. As to expression, expressed by the venom gland.

Its subcellular location is the secreted. The catalysed reaction is a 1,2-diacyl-sn-glycero-3-phosphocholine + H2O = a 1-acyl-sn-glycero-3-phosphocholine + a fatty acid + H(+). Functionally, basic phospholipase A2 that inhibits ADP-, thrombin- and arachidonic acid-induced platelet aggregation. It also exhibits anticoagulant effects upon human plasma in vitro. It induces a high hemolytic activity reaching its maximum after 24 hours. It induces a marked elevation of plasmatic levels of interleukin-6 and -10, eosinophil peroxidase and complement lytic activities and it also provokes a drastic increase of lymphocytes, monocytes and neutrophils in peripheral blood accompanied by a rapid intense migration of neutrophils to the peritoneal cavity. PLA2 catalyzes the calcium-dependent hydrolysis of the 2-acyl groups in 3-sn-phosphoglycerides. This is Basic phospholipase A2 Cc2-PLA2 from Cerastes cerastes (Horned desert viper).